Here is a 282-residue protein sequence, read N- to C-terminus: Bis(5'-nucleosyl)-tetraphosphatase, symmetrical (282 aa).

Belongs to the Ap4A hydrolase family.

The enzyme catalyses P(1),P(4)-bis(5'-adenosyl) tetraphosphate + H2O = 2 ADP + 2 H(+). Functionally, hydrolyzes diadenosine 5',5'''-P1,P4-tetraphosphate to yield ADP. This is Bis(5'-nucleosyl)-tetraphosphatase, symmetrical from Klebsiella pneumoniae (strain 342).